Here is a 178-residue protein sequence, read N- to C-terminus: Large ribosomal subunit protein uL6 (178 aa).

The protein belongs to the universal ribosomal protein uL6 family. As to quaternary structure, part of the 50S ribosomal subunit.

In terms of biological role, this protein binds to the 23S rRNA, and is important in its secondary structure. It is located near the subunit interface in the base of the L7/L12 stalk, and near the tRNA binding site of the peptidyltransferase center. In Halalkalibacterium halodurans (strain ATCC BAA-125 / DSM 18197 / FERM 7344 / JCM 9153 / C-125) (Bacillus halodurans), this protein is Large ribosomal subunit protein uL6.